A 100-amino-acid chain; its full sequence is Aspartyl/glutamyl-tRNA(Asn/Gln) amidotransferase subunit C (100 aa).

It belongs to the GatC family. In terms of assembly, heterotrimer of A, B and C subunits.

The catalysed reaction is L-glutamyl-tRNA(Gln) + L-glutamine + ATP + H2O = L-glutaminyl-tRNA(Gln) + L-glutamate + ADP + phosphate + H(+). It carries out the reaction L-aspartyl-tRNA(Asn) + L-glutamine + ATP + H2O = L-asparaginyl-tRNA(Asn) + L-glutamate + ADP + phosphate + 2 H(+). Allows the formation of correctly charged Asn-tRNA(Asn) or Gln-tRNA(Gln) through the transamidation of misacylated Asp-tRNA(Asn) or Glu-tRNA(Gln) in organisms which lack either or both of asparaginyl-tRNA or glutaminyl-tRNA synthetases. The reaction takes place in the presence of glutamine and ATP through an activated phospho-Asp-tRNA(Asn) or phospho-Glu-tRNA(Gln). This chain is Aspartyl/glutamyl-tRNA(Asn/Gln) amidotransferase subunit C, found in Streptococcus equi subsp. zooepidemicus (strain MGCS10565).